We begin with the raw amino-acid sequence, 181 residues long: Transcription termination/antitermination protein NusG (181 aa).

The KOW domain maps to 130-161; that stretch reads PGELVRVSDGPFADFNGVVEEVDYEKSRLKVS.

It belongs to the NusG family. Monomer. Interacts with the transcription termination factor Rho and with RNA polymerase.

In terms of biological role, participates in transcription elongation, termination and antitermination. In the absence of Rho, increases the rate of transcription elongation by the RNA polymerase (RNAP), probably by partially suppressing pausing. In the presence of Rho, modulates most Rho-dependent termination events by interacting with the RNAP to render the complex more susceptible to the termination activity of Rho. May be required to overcome a kinetic limitation of Rho to function at certain terminators. Also involved in ribosomal RNA transcriptional antitermination. The protein is Transcription termination/antitermination protein NusG of Yersinia pestis.